The following is a 1039-amino-acid chain: Probable inorganic carbon transporter subunit DabA 1 (1039 aa).

Zn(2+) contacts are provided by Cys-462, Asp-464, His-721, and Cys-736.

It belongs to the inorganic carbon transporter (TC 9.A.2) DabA family. In terms of assembly, forms a complex with DabB. It depends on Zn(2+) as a cofactor.

It is found in the cell inner membrane. In terms of biological role, part of an energy-coupled inorganic carbon pump. The chain is Probable inorganic carbon transporter subunit DabA 1 from Nitrobacter hamburgensis (strain DSM 10229 / NCIMB 13809 / X14).